The following is a 316-amino-acid chain: Aprataxin (316 aa).

Positions 1–38 (HASARGEGFLLLKADCNKGYVTVKQIGVNPTSVDLVDV) constitute an FHA-like domain. The disordered stretch occupies residues 104–142 (KKMEVVDTQSSSADLRPSKSSVSPHEGTTSRKEHLGHWS). A compositionally biased stretch (polar residues) spans 110–130 (DTQSSSADLRPSKSSVSPHEG). Residues 142 to 247 (SQGLKSSMQD…ISQDFDSPAL (106 aa)) form the HIT domain. Interaction with DNA substrate regions lie at residues 167–171 (DKYPK) and 229–230 (SM). Residues 232 to 236 (QLHLH) carry the Histidine triad motif motif. The active-site Tele-AMP-histidine intermediate is His-234. The segment at 291–313 (LRCHLCKQQLSTIPQLKEHLKKH) adopts a C2H2-type zinc-finger fold.

It is found in the nucleus. It localises to the nucleoplasm. The protein localises to the nucleolus. The enzyme catalyses a 5'-end adenosine-5'-diphospho-5'-2'-deoxyribonucleoside-DNA + H2O = a 5'-end 5'-phospho-2'-deoxyribonucleoside-DNA + AMP + 2 H(+). It carries out the reaction a 5'-end adenosine-5'-diphospho-5'-ribonucleoside-2'-deoxyribonucleotide-DNA + H2O = a 5'-end 5'-phospho-ribonucleoside-2'-deoxyribonucleotide-DNA + AMP + 2 H(+). The catalysed reaction is a 3'-end 2'-deoxyribonucleotide-3'-diphospho-5'-guanosine-DNA + H2O = a 3'-end 2'-deoxyribonucleotide 3'-phosphate-DNA + GMP + 2 H(+). In terms of biological role, DNA-binding protein involved in single-strand DNA break repair, double-strand DNA break repair and base excision repair. Resolves abortive DNA ligation intermediates formed either at base excision sites, or when DNA ligases attempt to repair non-ligatable breaks induced by reactive oxygen species. Catalyzes the release of adenylate groups covalently linked to 5'-phosphate termini, resulting in the production of 5'-phosphate termini that can be efficiently rejoined. Also able to hydrolyze adenosine 5'-monophosphoramidate (AMP-NH(2)) and diadenosine tetraphosphate (AppppA), but with lower catalytic activity. Likewise, catalyzes the release of 3'-linked guanosine (DNAppG) and inosine (DNAppI) from DNA, but has higher specific activity with 5'-linked adenosine (AppDNA). This is Aprataxin (APTX) from Gallus gallus (Chicken).